The sequence spans 158 residues: Protein SREK1IP1 (158 aa).

Disordered regions lie at residues 1–20 and 45–158; these read MAAPGPNKDNIRAGCKRCGY and SSTS…SDTD. The segment at 13 to 30 adopts a CCHC-type zinc-finger fold; the sequence is AGCKRCGYPGHLTFECRN. Over residues 59 to 79 the composition is skewed to basic and acidic residues; sequence ALSKEKIFGSHSKGSQEDSRK. Composition is skewed to basic residues over residues 80 to 98 and 111 to 140; these read EKHKKKSKERSRGKAKKRS and KKKKKRKSNKKKGKKEKREKERKHKKKQKK. Low complexity predominate over residues 145 to 158; sequence SSSSDSSSESSDTD.

Functionally, possible splicing regulator involved in the control of cellular survival. The protein is Protein SREK1IP1 (srek1ip1) of Danio rerio (Zebrafish).